A 411-amino-acid chain; its full sequence is Putative ion-transport protein YfeO (411 aa).

The next 11 membrane-spanning stretches (helical) occupy residues 9 to 29 (MLLL…VLIA), 54 to 74 (DSPF…GLII), 99 to 119 (ALPG…SLGP), 149 to 169 (ILAS…AALI), 186 to 206 (LFAP…FFHP), 223 to 243 (IASG…AVWC), 258 to 278 (VLIL…GGPL), 296 to 316 (LGAG…VIAA), 322 to 342 (GGRI…LHAH), 343 to 363 (VEAV…VLVV), and 386 to 406 (LLCI…LLAA).

The protein belongs to the chloride channel (TC 2.A.49) family.

The protein localises to the cell membrane. This Salmonella paratyphi A (strain ATCC 9150 / SARB42) protein is Putative ion-transport protein YfeO.